Consider the following 1360-residue polypeptide: MAQSFTGKKRIRKSFGRIPEAVQMPNLIEVQRSSYEQFLQREVRPGVRKDEGIEAVFKSVFPIKDFNERAVLEYVSYEFEEPKYDVEECIQRDMTFAAPLKVKLRLIVFETEEETGARSVKDIKEQDVYMGDIPLMTDKGTFIVNGTERVIVSQMHRSPGVFFDHDKGKTHASGKLLFAARVIPYRGSWLDFEFDAKDVVYVRIDRRRKLPATTFLYALGMDGEEILTTFYDVVPFEKRTAAGAEGWATPYKPERWRGVKPEFALIDADSGEEVAAAGTKITARQAKKLADNGLKTLLLAPEALTGRYLARDAVNFETGEIYAEAGDELDVTSIEALAAQGFSTIDVLDIDHVTVGAYMRNTLRVDKNAVREDALFDIYRVMRPGEPPTVEAAEAMFKSLFFDAERYDLSAVGRVKMNMRLELDASDEMRVLRKEDVLAVLKLLVGLRDGRGEIDDIDNLGNRRVRSVGELLENQYRVGLLRMERAIKERMSSVDIDTVMPHDLINAKPAAASVREFFGSSQLSQFMDQTNPLSEITHKRRLSALGPGGLTRERAGFEVRDVHPTHYGRICPIETPEGPNIGLINSLATHARVNKYGFIESPYRRVADGKPLEEVVYMSAMEESKHVIAQSNIKVLNGEIVDDLVPGRINGEPTLLQKEQVDLMDVSPRQVVSVAAALIPFLENDDANRALMGSNMQRQAVPLVQSDAPLVGTGMEAVVARDSGAVVIAKRTGVVEQIDGTRIVVRATEETDAARSGVDIYRLSKFQRSNQSTCINQRPLVKVGDKISAGDIIADGPSTELGELALGRNALVAFMPWNGYNFEDSILISERIVRDDVFTSIHIEEFEVMARDTKLGPEEITRDIPNVGEEALRNLDEAGIVAIGAEVQPGDILVGKVTPKGESPMTPEEKLLRAIFGEKASDVRDTSLRLPPGVAGTIVDVRVFNRHGVDKDERALAIERAEIDRLGKDRDDEFAILNRNISGRLRELLIGNVALSGPKGLSRGQITAEGLAEVQPGLWWQIALEDEKAMGELESLRRLFDENRKRLDRRFEDKVDKLQRGDELPPGVMKMVKVFVAVKRKLQPGDKMAGRHGNKGVISRILPIEDMPFLADGTHVDVVLNPLGVPSRMNVGQIFETHLGWACAGLGKQITTLLEDWQAGGQKQALIDRLTEIYGPDEELPETEEELVELARNLGKGVPIATPVFDGARIGDIEDHLRMAGLDPSGQSILYDGQTGEQFKRPVTVGYIYMLKLHHLVDDKIHARSIGPYSLVTQQPLGGKAQFGGQRFGEMEVWALEAYGAAYTLQEMLTVKSDDVAGRTKVYESIVRGDDTFEAGIPESFNVLVKEMRSLGLNVELENS.

It belongs to the RNA polymerase beta chain family. As to quaternary structure, the RNAP catalytic core consists of 2 alpha, 1 beta, 1 beta' and 1 omega subunit. When a sigma factor is associated with the core the holoenzyme is formed, which can initiate transcription.

The enzyme catalyses RNA(n) + a ribonucleoside 5'-triphosphate = RNA(n+1) + diphosphate. In terms of biological role, DNA-dependent RNA polymerase catalyzes the transcription of DNA into RNA using the four ribonucleoside triphosphates as substrates. The chain is DNA-directed RNA polymerase subunit beta from Caulobacter sp. (strain K31).